Reading from the N-terminus, the 156-residue chain is MLDIVLYQPEIPPNTGNIIRLCANTGYRLHLIEPLGFEWDDKRVKRAGLDYHEFAEVKRWPNFEAFLEAVAPTRVFACTTKGRTAHSAVQFAAGDALLFGPESRGLPIEIIESLPFEQRLRIPMLPQSRSMNLANAVAVFVYESWRQLGYAGSLQE.

S-adenosyl-L-methionine contacts are provided by G100, I122, and S130.

It belongs to the class IV-like SAM-binding methyltransferase superfamily. RNA methyltransferase TrmH family. TrmL subfamily. As to quaternary structure, homodimer.

It localises to the cytoplasm. The enzyme catalyses cytidine(34) in tRNA + S-adenosyl-L-methionine = 2'-O-methylcytidine(34) in tRNA + S-adenosyl-L-homocysteine + H(+). It catalyses the reaction 5-carboxymethylaminomethyluridine(34) in tRNA(Leu) + S-adenosyl-L-methionine = 5-carboxymethylaminomethyl-2'-O-methyluridine(34) in tRNA(Leu) + S-adenosyl-L-homocysteine + H(+). In terms of biological role, methylates the ribose at the nucleotide 34 wobble position in the two leucyl isoacceptors tRNA(Leu)(CmAA) and tRNA(Leu)(cmnm5UmAA). Catalyzes the methyl transfer from S-adenosyl-L-methionine to the 2'-OH of the wobble nucleotide. This Aeromonas hydrophila subsp. hydrophila (strain ATCC 7966 / DSM 30187 / BCRC 13018 / CCUG 14551 / JCM 1027 / KCTC 2358 / NCIMB 9240 / NCTC 8049) protein is tRNA (cytidine(34)-2'-O)-methyltransferase.